We begin with the raw amino-acid sequence, 477 residues long: Probable cytosolic Fe-S cluster assembly factor GK14772 (477 aa).

[4Fe-4S] cluster contacts are provided by cysteine 23, cysteine 69, cysteine 72, cysteine 75, cysteine 188, cysteine 244, cysteine 396, and cysteine 400.

This sequence belongs to the NARF family.

Component of the cytosolic iron-sulfur (Fe/S) protein assembly machinery. Required for maturation of extramitochondrial Fe/S proteins. In Drosophila willistoni (Fruit fly), this protein is Probable cytosolic Fe-S cluster assembly factor GK14772.